We begin with the raw amino-acid sequence, 213 residues long: tRNA (guanine-N(7)-)-methyltransferase (213 aa).

4 residues coordinate S-adenosyl-L-methionine: Asp-44, Glu-69, Asn-96, and Asp-119. The active site involves Asp-119. Substrate contacts are provided by Lys-123 and Asp-155.

It belongs to the class I-like SAM-binding methyltransferase superfamily. TrmB family.

The catalysed reaction is guanosine(46) in tRNA + S-adenosyl-L-methionine = N(7)-methylguanosine(46) in tRNA + S-adenosyl-L-homocysteine. It participates in tRNA modification; N(7)-methylguanine-tRNA biosynthesis. Catalyzes the formation of N(7)-methylguanine at position 46 (m7G46) in tRNA. The polypeptide is tRNA (guanine-N(7)-)-methyltransferase (Thermosynechococcus vestitus (strain NIES-2133 / IAM M-273 / BP-1)).